The primary structure comprises 516 residues: Maturase K (516 aa).

Belongs to the intron maturase 2 family. MatK subfamily.

It localises to the plastid. It is found in the chloroplast. Usually encoded in the trnK tRNA gene intron. Probably assists in splicing its own and other chloroplast group II introns. The sequence is that of Maturase K from Medeola virginiana (Indian cucumber root).